A 436-amino-acid polypeptide reads, in one-letter code: FAD-dependent monooxygenase pigN (436 aa).

The FAD site is built by E40, G53, and R118. The active site involves R200. Positions 316 and 329 each coordinate FAD.

This sequence belongs to the paxM FAD-dependent monooxygenase family. Requires FAD as cofactor.

The protein operates within secondary metabolite biosynthesis. FAD-dependent monooxygenase; part of the gene cluster that mediates the biosynthesis of azaphilone pigments (MonAzPs), a complex mixture of compounds with a common azaphilone skeleton very widely used as food colorants. Within the pathway, pigN hydroxylates the benzaldehyde M7PKS-1 intermediate at C-4 to form the pyran ring. The first step of the pathway is performed by the nrPKS pigA that forms the hexaketide precursor from successive condensations of five malonyl-CoA units, with a simple acetyl-CoA starter unit. The role of esterase pigG is not clear, but it may play at most a supplementary role in the formation of the benzaldehyde produced by the pigA nrPKS. This very reactive benzaldehyde is intercepted by the pigC ketoreductase that to provide the first stable enzyme-free MonAzPs intermediate, 6-(4-hydroxy-2-oxopentyl)-3-methyl-2,4-dioxocyclohexane carbaldehyde, also known as M7PKS-1. The FAD-dependent monooxygenase pigN hydroxylates M7PKS-1 at C-4, which triggers the formation of the pyran ring. PigJ, pigK and pigD are involved in the acetylation of the pyran ring. PigJ and pigK form the two subunits of a dedicated fungal FAS that produces the side chain fatty acyl moiety of MonAzPs and pigD transfers the fatty acyl chain to the C-4 alcohol. PigM and pigO are involved in the elimination of the omega-1 alcohol. PigM acts as an O-acetyltransferase that synthesizes the putative O-11 acetyl intermediate whereas pigO eliminates acetic acid to yield an intermediate with a C10(11) double bond. The dehydration of the C-11 alcohol followed by the reduction of the C6(7) double bond by the NAD(P)H-dependent oxidoreductase pigE increases the electrophilicity of the C-5 ketone of the resulting acyl benzopyran. This in turn sets up the C-5 ketone for an intramolecular Knoevenagel aldol condensation with the C-20 enol of the side chain. This condensation affords the characteristic linear tricyclic carbon skeletons of the yellow pigments that serve as the common precursors for the classical yellow pigments monascin and ankaflavin, orange pigments rubopunctatin and monascorubrin, and red pigments ribropunctamine and monascorubramine. The FAD-dependent oxidoreductase pigF is especially invoved in the biosynthesis of orange and red pigments via desaturation of C6(7). In Monascus ruber (Mold), this protein is FAD-dependent monooxygenase pigN.